The sequence spans 403 residues: S-adenosylmethionine synthase (403 aa).

His17 is an ATP binding site. Residue Asp19 coordinates Mg(2+). Glu45 is a binding site for K(+). 2 residues coordinate L-methionine: Glu58 and Gln104. The segment at 104-114 (QSPDIAQGVDT) is flexible loop. ATP contacts are provided by residues 179–181 (DGK), 250–251 (KF), Asp259, 265–266 (RK), Ala282, and Lys286. Asp259 contributes to the L-methionine binding site. Lys290 is a binding site for L-methionine.

The protein belongs to the AdoMet synthase family. Homotetramer; dimer of dimers. Mg(2+) serves as cofactor. K(+) is required as a cofactor.

It localises to the cytoplasm. It catalyses the reaction L-methionine + ATP + H2O = S-adenosyl-L-methionine + phosphate + diphosphate. It functions in the pathway amino-acid biosynthesis; S-adenosyl-L-methionine biosynthesis; S-adenosyl-L-methionine from L-methionine: step 1/1. Its function is as follows. Catalyzes the formation of S-adenosylmethionine (AdoMet) from methionine and ATP. The overall synthetic reaction is composed of two sequential steps, AdoMet formation and the subsequent tripolyphosphate hydrolysis which occurs prior to release of AdoMet from the enzyme. This is S-adenosylmethionine synthase from Mycobacterium tuberculosis (strain ATCC 25177 / H37Ra).